A 340-amino-acid chain; its full sequence is 7,8-didemethyl-8-hydroxy-5-deazariboflavin synthase (340 aa).

The region spanning 25 to 256 is the Radical SAM core domain; the sequence is ATYSPAYTIV…SDITIQIPPN (232 aa). Cys-39, Cys-43, and Cys-46 together coordinate [4Fe-4S] cluster.

The protein belongs to the radical SAM superfamily. CofG family. As to quaternary structure, consists of two subunits, CofG and CofH. The cofactor is [4Fe-4S] cluster.

It catalyses the reaction 5-amino-5-(4-hydroxybenzyl)-6-(D-ribitylimino)-5,6-dihydrouracil + S-adenosyl-L-methionine = 7,8-didemethyl-8-hydroxy-5-deazariboflavin + 5'-deoxyadenosine + L-methionine + NH4(+) + H(+). It functions in the pathway cofactor biosynthesis; coenzyme F0 biosynthesis. Functionally, catalyzes the radical-mediated synthesis of 7,8-didemethyl-8-hydroxy-5-deazariboflavin from 5-amino-5-(4-hydroxybenzyl)-6-(D-ribitylimino)-5,6-dihydrouracil. This Trichormus variabilis (strain ATCC 29413 / PCC 7937) (Anabaena variabilis) protein is 7,8-didemethyl-8-hydroxy-5-deazariboflavin synthase.